The sequence spans 319 residues: Ribosomal RNA small subunit methyltransferase H (319 aa).

Residues 38–40 (GGH), D58, F82, D104, and Q111 contribute to the S-adenosyl-L-methionine site.

The protein belongs to the methyltransferase superfamily. RsmH family.

Its subcellular location is the cytoplasm. It catalyses the reaction cytidine(1402) in 16S rRNA + S-adenosyl-L-methionine = N(4)-methylcytidine(1402) in 16S rRNA + S-adenosyl-L-homocysteine + H(+). Functionally, specifically methylates the N4 position of cytidine in position 1402 (C1402) of 16S rRNA. This Histophilus somni (strain 129Pt) (Haemophilus somnus) protein is Ribosomal RNA small subunit methyltransferase H.